A 608-amino-acid polypeptide reads, in one-letter code: 1-deoxy-D-xylulose-5-phosphate synthase (608 aa).

Thiamine diphosphate is bound by residues histidine 80 and 121–123 (GHS). Residue aspartate 152 participates in Mg(2+) binding. Thiamine diphosphate contacts are provided by residues 153–154 (GA), asparagine 181, tyrosine 282, and glutamate 357. Asparagine 181 is a Mg(2+) binding site.

It belongs to the transketolase family. DXPS subfamily. Homodimer. It depends on Mg(2+) as a cofactor. Thiamine diphosphate is required as a cofactor.

It carries out the reaction D-glyceraldehyde 3-phosphate + pyruvate + H(+) = 1-deoxy-D-xylulose 5-phosphate + CO2. Its pathway is metabolic intermediate biosynthesis; 1-deoxy-D-xylulose 5-phosphate biosynthesis; 1-deoxy-D-xylulose 5-phosphate from D-glyceraldehyde 3-phosphate and pyruvate: step 1/1. Functionally, catalyzes the acyloin condensation reaction between C atoms 2 and 3 of pyruvate and glyceraldehyde 3-phosphate to yield 1-deoxy-D-xylulose-5-phosphate (DXP). The chain is 1-deoxy-D-xylulose-5-phosphate synthase from Buchnera aphidicola subsp. Acyrthosiphon pisum (strain 5A).